The following is a 98-amino-acid chain: Scrapie-responsive protein 1 (98 aa).

An N-terminal signal peptide occupies residues 1–20 (MKLMVLVFTIGLTLLLGVQA). Asn72 carries N-linked (GlcNAc...) asparagine glycosylation.

Belongs to the SCRG1 family. In terms of tissue distribution, expressed abundantly in the central nervous system of adult, but not at all in fetal brain. High levels of SCRG1 transcripts are also observed in testis and aorta.

It localises to the secreted. The protein is Scrapie-responsive protein 1 (SCRG1) of Homo sapiens (Human).